Reading from the N-terminus, the 1079-residue chain is DNA annealing helicase and endonuclease ZRANB3 (1079 aa).

In terms of domain architecture, Helicase ATP-binding spans 46–208 (IFALKRNGRC…FMQIEALFPQ (163 aa)). Residues 46–481 (IFALKRNGRC…GRKEKIQAEE (436 aa)) are DNA annealing helicase activity. 59–66 (DEMGLGKT) serves as a coordination point for ATP. The short motif at 157-160 (DESH) is the DEAH box element. Residues 325–481 (AVKDYIKMML…GRKEKIQAEE (157 aa)) enclose the Helicase C-terminal domain. Positions 519 to 526 (QHDIRSFF) match the PIP-box motif. A Phosphoserine modification is found at serine 569. Residues 582–601 (ASEDHCSPSEETPSQSKQIR) are disordered. The span at 590 to 600 (SEETPSQSKQI) shows a compositional bias: polar residues. The segment at 621 to 650 (PVEGWQCSLCTYINNSELPYCEMCETPQGS) adopts a RanBP2-type zinc-finger fold. Residue cysteine 630 is modified to (Microbial infection) S-methylcysteine. The tract at residues 689 to 725 (LAQSEPGQLADSKEETPKIEKEDGLTSQPGNEQWKSS) is disordered. Over residues 699 to 712 (DSKEETPKIEKEDG) the composition is skewed to basic and acidic residues. A compositionally biased stretch (polar residues) spans 713 to 725 (LTSQPGNEQWKSS). In terms of domain architecture, HNH spans 1011 to 1051 (PGEGHFWQVDHIKPVYGGGGQCSLDNLQTLCTVCHKERTAR). The segment at 1011–1079 (PGEGHFWQVD…SDITRFLVKK (69 aa)) is endonuclease activity. An APIM motif motif is present at residues 1074–1078 (RFLVK).

This sequence belongs to the SNF2/RAD54 helicase family. In terms of assembly, interacts (via PIP-box and RanBP2-type zinc finger) with PCNA (when PCNA is polyubiquitinated via 'Lys-63'-linked polyubiquitin). In terms of processing, (Microbial infection) Methylation at Cys-630 by enteropathogenic E.coli protein NleE or S.flexneri protein OspZ: methylation disrupts ability to bind 'Lys-63'-linked ubiquitin.

It localises to the nucleus. The protein resides in the chromosome. DNA annealing helicase and endonuclease required to maintain genome stability at stalled or collapsed replication forks by facilitating fork restart and limiting inappropriate recombination that could occur during template switching events. Recruited to the sites of stalled DNA replication by polyubiquitinated PCNA and acts as a structure-specific endonuclease that cleaves the replication fork D-loop intermediate, generating an accessible 3'-OH group in the template of the leading strand, which is amenable to extension by DNA polymerase. In addition to endonuclease activity, also catalyzes the fork regression via annealing helicase activity in order to prevent disintegration of the replication fork and the formation of double-strand breaks. This is DNA annealing helicase and endonuclease ZRANB3 from Homo sapiens (Human).